The chain runs to 65 residues: MSKLKTRKSAAKRFKATATGKFMRRRAFHNHLLDHKSSKLKRHLSTKAVVDERDADNVRLMIPYA.

This sequence belongs to the bacterial ribosomal protein bL35 family.

This Prochlorococcus marinus (strain MIT 9215) protein is Large ribosomal subunit protein bL35.